The chain runs to 87 residues: Small ribosomal subunit protein uS15c (87 aa).

The protein belongs to the universal ribosomal protein uS15 family. Part of the 30S ribosomal subunit.

The protein localises to the plastid. Its subcellular location is the chloroplast. This is Small ribosomal subunit protein uS15c (rps15) from Solanum bulbocastanum (Wild potato).